A 240-amino-acid chain; its full sequence is Lipoprotein-releasing system ATP-binding protein LolD (240 aa).

The region spanning 15-240 (IRAESLGKTY…GLRELTSAEV (226 aa)) is the ABC transporter domain. 51–58 (GASGAGKS) contributes to the ATP binding site.

Belongs to the ABC transporter superfamily. Lipoprotein translocase (TC 3.A.1.125) family. The complex is composed of two ATP-binding proteins (LolD) and two transmembrane proteins (LolC and LolE).

The protein resides in the cell inner membrane. In terms of biological role, part of the ABC transporter complex LolCDE involved in the translocation of mature outer membrane-directed lipoproteins, from the inner membrane to the periplasmic chaperone, LolA. Responsible for the formation of the LolA-lipoprotein complex in an ATP-dependent manner. This Xylella fastidiosa (strain Temecula1 / ATCC 700964) protein is Lipoprotein-releasing system ATP-binding protein LolD.